A 548-amino-acid chain; its full sequence is Solute carrier family 22 member 7 (548 aa).

12 helical membrane passes run 21 to 41 (VALL…PIFL), 146 to 166 (AAST…GYLS), 180 to 200 (VSTL…MFAI), 204 to 224 (LTGS…LEWL), 234 to 254 (VLSS…GYLI), 259 to 279 (WLLL…WWVP), 346 to 366 (ISLC…GLSL), 376 to 397 (YQTQ…YLSV), 404 to 423 (LTQA…RLLV), 432 to 452 (TVLA…AYLF), 466 to 486 (MGLT…AALL), and 493 to 513 (LPKL…LLLP). A disordered region spans residues 522–548 (ETIQDVERKSAPTSLQEEEMPMKQVQN).

It belongs to the major facilitator (TC 2.A.1) superfamily. Organic cation transporter (TC 2.A.1.19) family.

Its subcellular location is the basolateral cell membrane. The protein localises to the apical cell membrane. It localises to the cell membrane. The enzyme catalyses orotate(out) + L-glutamate(in) = orotate(in) + L-glutamate(out). It carries out the reaction 3',5'-cyclic GMP(in) = 3',5'-cyclic GMP(out). It catalyses the reaction GMP(in) = GMP(out). The catalysed reaction is 2'-deoxyguanosine(in) = 2'-deoxyguanosine(out). The enzyme catalyses GDP(in) = GDP(out). It carries out the reaction guanosine(in) = guanosine(out). It catalyses the reaction GTP(in) = GTP(out). The catalysed reaction is 3',5'-cyclic AMP(in) = 3',5'-cyclic AMP(out). The enzyme catalyses creatinine(in) = creatinine(out). It carries out the reaction prostaglandin E2(out) = prostaglandin E2(in). It catalyses the reaction 2-oxoglutarate(in) = 2-oxoglutarate(out). The catalysed reaction is glutarate(in) = glutarate(out). The enzyme catalyses urate(out) = urate(in). It carries out the reaction estrone 3-sulfate(out) = estrone 3-sulfate(in). In terms of biological role, functions as a Na(+)-independent bidirectional multispecific transporter. Contributes to the renal and hepatic elimination of endogenous organic compounds from the systemic circulation into the urine and bile, respectively. Capable of transporting a wide range of purine and pyrimidine nucleobases, nucleosides and nucleotides, with cGMP, 2'deoxyguanosine and GMP being the preferred substrates. Functions as a pH- and chloride-independent cGMP bidirectional facilitative transporter that can regulate both intracellular and extracellular levels of cGMP and may be involved in cGMP signaling pathways. Mediates orotate/glutamate bidirectional exchange and most likely display a physiological role in hepatic release of glutamate into the blood. Involved in renal secretion and possible reabsorption of creatinine. Able to uptake prostaglandin E2 (PGE2) and may contribute to PGE2 renal excretion. Also transports alpha-ketoglutarate and urate. Apart from the orotate/glutamate exchange, the counterions for the uptake of other SLC22A7/OAT2 substrates remain to be identified. This Pongo abelii (Sumatran orangutan) protein is Solute carrier family 22 member 7 (SLC22A7).